Consider the following 217-residue polypeptide: Putative thymidylate synthase (217 aa).

Cys139 is an active-site residue.

The protein belongs to the thymidylate synthase family. Archaeal-type ThyA subfamily. In terms of assembly, monomer.

The protein localises to the cytoplasm. The protein operates within pyrimidine metabolism; dTTP biosynthesis. Its function is as follows. May catalyze the biosynthesis of dTMP using an unknown cosubstrate. The protein is Putative thymidylate synthase of Methanosarcina barkeri (strain Fusaro / DSM 804).